The chain runs to 297 residues: Inactive beta selinene synthase (297 aa).

This sequence belongs to the terpene synthase family. Monomer.

Its subcellular location is the cytoplasm. Functionally, inactive selinene synthase. This is Inactive beta selinene synthase from Zea mays (Maize).